Here is a 499-residue protein sequence, read N- to C-terminus: Glycerol kinase (499 aa).

T14 provides a ligand contact to ADP. ATP contacts are provided by T14, T15, and S16. Position 14 (T14) interacts with sn-glycerol 3-phosphate. R18 provides a ligand contact to ADP. R84, E85, Y136, and D245 together coordinate sn-glycerol 3-phosphate. Glycerol contacts are provided by R84, E85, Y136, D245, and Q246. ADP is bound by residues T267 and G310. ATP-binding residues include T267, G310, Q314, and G411. ADP contacts are provided by G411 and N415.

The protein belongs to the FGGY kinase family.

The enzyme catalyses glycerol + ATP = sn-glycerol 3-phosphate + ADP + H(+). It functions in the pathway polyol metabolism; glycerol degradation via glycerol kinase pathway; sn-glycerol 3-phosphate from glycerol: step 1/1. Inhibited by fructose 1,6-bisphosphate (FBP). Key enzyme in the regulation of glycerol uptake and metabolism. Catalyzes the phosphorylation of glycerol to yield sn-glycerol 3-phosphate. The polypeptide is Glycerol kinase (Nitrosomonas eutropha (strain DSM 101675 / C91 / Nm57)).